Reading from the N-terminus, the 338-residue chain is Fructose-1,6-bisphosphatase 1 (338 aa).

Ala-2 is modified (N-acetylalanine). AMP contacts are provided by residues 18–22 (VMEEG) and 28–32 (TGEMT). Mg(2+) contacts are provided by Asp-69 and Glu-98. Residue 113–114 (KY) participates in AMP binding. Positions 119, 121, and 122 each coordinate Mg(2+). 122–125 (DGSS) lines the substrate pocket. AMP is bound at residue Arg-141. Lys-151 is modified (N6-succinyllysine). Substrate contacts are provided by residues 213–216 (NEGY), 244–249 (RYVGSM), Tyr-265, and 275–277 (KLR). Phosphotyrosine is present on residues Tyr-216, Tyr-245, and Tyr-265. Residue Glu-281 coordinates Mg(2+).

This sequence belongs to the FBPase class 1 family. Homotetramer. Mg(2+) is required as a cofactor.

It catalyses the reaction beta-D-fructose 1,6-bisphosphate + H2O = beta-D-fructose 6-phosphate + phosphate. It functions in the pathway carbohydrate biosynthesis; gluconeogenesis. Subject to complex allosteric regulation. The enzyme can assume an active R-state, or an inactive T-state. Intermediate conformations may exist. AMP acts as an allosteric inhibitor. AMP binding affects the turnover of bound substrate and not the affinity for substrate. Fructose 2,6-bisphosphate acts as a competitive inhibitor. Fructose 2,6-bisphosphate and AMP have synergistic effects. Its function is as follows. Catalyzes the hydrolysis of fructose 1,6-bisphosphate to fructose 6-phosphate in the presence of divalent cations, acting as a rate-limiting enzyme in gluconeogenesis. Plays a role in regulating glucose sensing and insulin secretion of pancreatic beta-cells. Appears to modulate glycerol gluconeogenesis in liver. Important regulator of appetite and adiposity; increased expression of the protein in liver after nutrient excess increases circulating satiety hormones and reduces appetite-stimulating neuropeptides and thus seems to provide a feedback mechanism to limit weight gain. The sequence is that of Fructose-1,6-bisphosphatase 1 (FBP1) from Oryctolagus cuniculus (Rabbit).